We begin with the raw amino-acid sequence, 544 residues long: Chaperonin GroEL (544 aa).

Residues 29-32 (TLGP), Lys50, 86-90 (DGTTT), Gly414, 477-479 (DAA), and Asp493 each bind ATP.

It belongs to the chaperonin (HSP60) family. Forms a cylinder of 14 subunits composed of two heptameric rings stacked back-to-back. Interacts with the co-chaperonin GroES.

It is found in the cytoplasm. It carries out the reaction ATP + H2O + a folded polypeptide = ADP + phosphate + an unfolded polypeptide.. Its function is as follows. Together with its co-chaperonin GroES, plays an essential role in assisting protein folding. The GroEL-GroES system forms a nano-cage that allows encapsulation of the non-native substrate proteins and provides a physical environment optimized to promote and accelerate protein folding. The chain is Chaperonin GroEL from Hydrogenovibrio crunogenus (strain DSM 25203 / XCL-2) (Thiomicrospira crunogena).